The chain runs to 551 residues: Glucose-6-phosphate isomerase (551 aa).

D-glucose 6-phosphate is bound by residues 161–162 (GS), 212–217 (SKTFTT), Gln356, Glu360, His391, and Lys516. The active-site Proton donor is Glu360. Catalysis depends on residues His391 and Lys516.

This sequence belongs to the GPI family. In terms of assembly, homodimer.

It localises to the cytoplasm. Its subcellular location is the cytosol. The enzyme catalyses alpha-D-glucose 6-phosphate = beta-D-fructose 6-phosphate. The protein operates within carbohydrate degradation; glycolysis; D-glyceraldehyde 3-phosphate and glycerone phosphate from D-glucose: step 2/4. In terms of biological role, in the cytoplasm, catalyzes the conversion of glucose-6-phosphate to fructose-6-phosphate, the second step in glycolysis, and the reverse reaction during gluconeogenesis. This Agaricus bisporus (White button mushroom) protein is Glucose-6-phosphate isomerase (gpi1).